Here is a 352-residue protein sequence, read N- to C-terminus: Dihydroorotate dehydrogenase (quinone) (352 aa).

Residues 68–72 and Thr92 contribute to the FMN site; that span reads AGFDK. Residue Lys72 participates in substrate binding. Residue 117–121 participates in substrate binding; it reads NAMGF. Residues Asn146 and Asn179 each coordinate FMN. Asn179 contacts substrate. The active-site Nucleophile is Ser182. Residue Asn184 participates in substrate binding. Lys215 and Thr243 together coordinate FMN. Residue 244–245 participates in substrate binding; that stretch reads NT. FMN is bound by residues Gly263, Gly292, and 313–314; that span reads YS.

The protein belongs to the dihydroorotate dehydrogenase family. Type 2 subfamily. As to quaternary structure, monomer. Requires FMN as cofactor.

It localises to the cell membrane. The catalysed reaction is (S)-dihydroorotate + a quinone = orotate + a quinol. It functions in the pathway pyrimidine metabolism; UMP biosynthesis via de novo pathway; orotate from (S)-dihydroorotate (quinone route): step 1/1. In terms of biological role, catalyzes the conversion of dihydroorotate to orotate with quinone as electron acceptor. The chain is Dihydroorotate dehydrogenase (quinone) from Sulfurimonas denitrificans (strain ATCC 33889 / DSM 1251) (Thiomicrospira denitrificans (strain ATCC 33889 / DSM 1251)).